Here is a 236-residue protein sequence, read N- to C-terminus: Probable transcriptional regulatory protein UUR10_0292 (236 aa).

The protein belongs to the TACO1 family.

It localises to the cytoplasm. This chain is Probable transcriptional regulatory protein UUR10_0292, found in Ureaplasma urealyticum serovar 10 (strain ATCC 33699 / Western).